Reading from the N-terminus, the 434-residue chain is Nicotinate phosphoribosyltransferase (434 aa).

His-242 carries the post-translational modification Phosphohistidine; by autocatalysis.

It belongs to the NAPRTase family. Post-translationally, transiently phosphorylated on a His residue during the reaction cycle. Phosphorylation strongly increases the affinity for substrates and increases the rate of nicotinate D-ribonucleotide production. Dephosphorylation regenerates the low-affinity form of the enzyme, leading to product release.

The enzyme catalyses nicotinate + 5-phospho-alpha-D-ribose 1-diphosphate + ATP + H2O = nicotinate beta-D-ribonucleotide + ADP + phosphate + diphosphate. The protein operates within cofactor biosynthesis; NAD(+) biosynthesis; nicotinate D-ribonucleotide from nicotinate: step 1/1. In terms of biological role, catalyzes the synthesis of beta-nicotinate D-ribonucleotide from nicotinate and 5-phospho-D-ribose 1-phosphate at the expense of ATP. The polypeptide is Nicotinate phosphoribosyltransferase (Rhizobium etli (strain ATCC 51251 / DSM 11541 / JCM 21823 / NBRC 15573 / CFN 42)).